The sequence spans 246 residues: Phosducin (246 aa).

Residues 1-14 (MEEAKSQSLEEDFE) are compositionally biased toward acidic residues. Residues 1–70 (MEEAKSQSLE…GKDSKERVSR (70 aa)) form a disordered region. Residues 1-244 (MEEAKSQSLE…LEHTKIEEED (244 aa)) enclose the Phosducin domain. Residues 60 to 69 (NGKDSKERVS) are compositionally biased toward basic and acidic residues. Ser73 carries the post-translational modification Phosphoserine; by PKA. The segment at 111–246 (YGFVYELETG…HTKIEEEDVE (136 aa)) is thioredoxin fold.

The protein belongs to the phosducin family. As to quaternary structure, forms a complex with the beta and gamma subunits of the GTP-binding protein, transducin. Interacts with CRX. In terms of processing, light-induced changes in cyclic nucleotide levels modulate the phosphorylation of this protein by cAMP kinase.

The protein resides in the cytoplasm. The protein localises to the cytosol. Its subcellular location is the nucleus. It localises to the cell projection. It is found in the cilium. The protein resides in the photoreceptor outer segment. The protein localises to the photoreceptor inner segment. Its function is as follows. May participate in the regulation of visual phototransduction or in the integration of photoreceptor metabolism. Inhibits the transcriptional activation activity of the cone-rod homeobox CRX. The polypeptide is Phosducin (PDC) (Homo sapiens (Human)).